A 538-amino-acid chain; its full sequence is Beta-1,4-mannosyl-glycoprotein 4-beta-N-acetylglucosaminyltransferase (538 aa).

The Cytoplasmic segment spans residues 1–7 (MKMRRYK). A helical; Signal-anchor for type II membrane protein membrane pass occupies residues 8–23 (LFLMFCMAGLCLISFL). At 24–538 (HFFKTLSYVT…VRGKLDTAEG (515 aa)) the chain is on the lumenal side. Residues 120–161 (PGTRMLEKPSPGRTEEKTEVSEGSSARGPARRPMRHVLSSRE) are disordered. N-linked (GlcNAc...) asparagine glycans are attached at residues N245, N263, and N401. Residues 507 to 538 (REPKSTVEGGRQNQGSDGRSSAVRGKLDTAEG) are disordered.

This sequence belongs to the glycosyltransferase 17 family. Interacts with MGAT4D. In terms of tissue distribution, highly expressed in brain and kidney and to a much lesser extent in stomach, heart, intestine, uterus, testis, ovary and lung. Not present in spleen, liver and muscle. In brain, expressed in neurons of hippocampus.

It is found in the golgi apparatus membrane. It carries out the reaction N(4)-{beta-D-GlcNAc-(1-&gt;2)-alpha-D-Man-(1-&gt;3)-[beta-D-GlcNAc-(1-&gt;2)-alpha-D-Man-(1-&gt;6)]-beta-D-Man-(1-&gt;4)-beta-D-GlcNAc-(1-&gt;4)-beta-D-GlcNAc}-L-asparaginyl-[protein] + UDP-N-acetyl-alpha-D-glucosamine = N(4)-{beta-D-GlcNAc-(1-&gt;2)-alpha-D-Man-(1-&gt;3)-[beta-D-GlcNAc-(1-&gt;4)]-[beta-D-GlcNAc-(1-&gt;2)-alpha-D-Man-(1-&gt;6)]-beta-D-Man-(1-&gt;4)-beta-D-GlcNAc-(1-&gt;4)-beta-D-GlcNAc}-L-asparaginyl-[protein] + UDP + H(+). Its pathway is protein modification; protein glycosylation. Its function is as follows. It is involved in the regulation of the biosynthesis and biological function of glycoprotein oligosaccharides. Catalyzes the addition of N-acetylglucosamine in beta 1-4 linkage to the beta-linked mannose of the trimannosyl core of N-linked sugar chains, called bisecting N-acetylglucosamine (GlcNAc). It is one of the most important enzymes involved in the regulation of the biosynthesis of glycoprotein oligosaccharides. The addition of this bisecting GlcNAc residue alters not only the composition, but also the conformation of the N-glycan. The introduction of the bisecting GlcNAc residue results in the suppression of further processing and elongation of N-glycans, precluding the formation of beta-1,6 GlcNAc branching, catalyzed by MGAT5 since it is unable to use the bisected oligosaccharide as a substrate. Addition of bisecting N-acetylglucosamine to CDH1/E-cadherin modulates CDH1 cell membrane location. Inhibits NeuAc-alpha-2,3-Gal-beta-1,4-GlcNAc- formation which modulates sialylation levels and plays a role in cell migration regulation. In brain, addition of bisecting N-acetylglucosamine to BACE1 blocks its lysosomal targeting in response to oxidative stress and further degradation which increases its location to early endosome and the APP cleavage. The sequence is that of Beta-1,4-mannosyl-glycoprotein 4-beta-N-acetylglucosaminyltransferase from Mus musculus (Mouse).